The following is a 446-amino-acid chain: GRAM domain-containing protein 2B (446 aa).

Position 1 is an N-acetylmethionine (Met-1). The tract at residues 1–120 (MVKKRLPSND…RKKSSSSSQY (120 aa)) is disordered. Over residues 29–43 (SRSSTDSPSSVFFSS) the composition is skewed to low complexity. Over residues 95 to 113 (DKNDCKTESKNDPKTERKK) the composition is skewed to basic and acidic residues. A GRAM domain is found at 124 to 191 (MHFHKLFLSV…FSVTLIKKTK (68 aa)). Positions 234–247 (TSVGNSPNPSSAEN) are enriched in polar residues. The tract at residues 234–253 (TSVGNSPNPSSAENSFRADR) is disordered. A phosphoserine mark is found at Ser-239, Ser-256, and Ser-266. Residues 276–298 (RQDMEGYSSSGSQTPESENSRDF) form a disordered region. Residues 282 to 292 (YSSSGSQTPES) are compositionally biased toward polar residues.

The sequence is that of GRAM domain-containing protein 2B (GRAMD2B) from Pongo abelii (Sumatran orangutan).